The chain runs to 102 residues: uncharacterized protein (102 aa).

Residues 1 to 13 are compositionally biased toward low complexity; that stretch reads PSSSQALSVPSLS. Positions 1–24 are disordered; sequence PSSSQALSVPSLSSEKKTASPTCV.

This is an uncharacterized protein from Human cytomegalovirus (strain AD169) (HHV-5).